A 302-amino-acid chain; its full sequence is Homoserine O-acetyltransferase 1 (302 aa).

Cysteine 142 serves as the catalytic Acyl-thioester intermediate. Substrate-binding residues include lysine 163 and serine 192. Histidine 235 serves as the catalytic Proton acceptor. The active site involves glutamate 237. A substrate-binding site is contributed by arginine 249.

Belongs to the MetA family.

It localises to the cytoplasm. The catalysed reaction is L-homoserine + acetyl-CoA = O-acetyl-L-homoserine + CoA. It participates in amino-acid biosynthesis; L-methionine biosynthesis via de novo pathway; O-acetyl-L-homoserine from L-homoserine: step 1/1. Transfers an acetyl group from acetyl-CoA to L-homoserine, forming acetyl-L-homoserine. This Ilyobacter polytropus (strain ATCC 51220 / DSM 2926 / LMG 16218 / CuHBu1) protein is Homoserine O-acetyltransferase 1.